Reading from the N-terminus, the 50-residue chain is Protein PsbN (50 aa).

The chain crosses the membrane as a helical span at residues 14 to 34; sequence VAVTILAVLLALTGFGLWTAF.

Belongs to the PsbN family.

The protein resides in the cellular thylakoid membrane. Functionally, may play a role in photosystem I and II biogenesis. The sequence is that of Protein PsbN from Prochlorococcus marinus subsp. pastoris (strain CCMP1986 / NIES-2087 / MED4).